Reading from the N-terminus, the 583-residue chain is MTRESAVATKRNWAILAAGVGLVYVLVRHRHRLLCPLRRVWSFGSLVPQRRIEVINSVQDPTTQWVLNELKNHCQTFKVLGFDCEWITVGGSRRPVALLQLSSHRGLCALFRLCHMKQIPQDLRELLEDDSVIKVGVAPQEDAMKLSHDYGVGVASTLDLRFLCVMAGHKPEGLGKLSKTHLNYTLDKHWRLACSNWEAKTLEPKQLDYAANDALMAVAIYQKLCRDLQPKHFWQRRQLDDNSMHNKFEPFLDVDFTKGFTLNPSGSGVTRSKGSTQSKSNKWVPKKQPYRQIATRTKDFYDNCLLQAPDGELLCTIDRRKASWYLNQNLGTHISEEPFTVRLNFEPAGRAVGDVGRFYQTIKKNQCVVCGDRDAYIRKNVVPREYRKHFPLVMKSHTSDDVLLLCPTCHQLSNISDLRVRSKLAVQCEAPFKQEDGSVKYHDDPQLKRVQSAGKALLHHGAKIPAAKKAEMEKTLLDYYSDQTDITEDLLRQAASVEYRVENSDYCQHGERVVQQYRDHFGGLVELERLWRQHFLHTMQPRFLPELWNVNHNADRLEVRASEGRIDKADLMVAGLDAKIKET.

Residues 1–11 are Mitochondrial intermembrane-facing; the sequence is MTRESAVATKR. A helical membrane pass occupies residues 12 to 29; the sequence is NWAILAAGVGLVYVLVRH. At 30–583 the chain is on the cytoplasmic side; sequence RHRLLCPLRR…AGLDAKIKET (554 aa). The region spanning 62–228 is the 3'-5' exonuclease domain; that stretch reads TTQWVLNELK…AIYQKLCRDL (167 aa). Residues D83, E85, and D213 each coordinate a divalent metal cation. The span at 266 to 281 shows a compositional bias: polar residues; that stretch reads GSGVTRSKGSTQSKSN. Residues 266–286 are disordered; that stretch reads GSGVTRSKGSTQSKSNKWVPK.

This sequence belongs to the EXD2 family. Homodimer. It depends on Mg(2+) as a cofactor. The cofactor is Mn(2+).

Its subcellular location is the mitochondrion membrane. Functionally, 3'-5' exoribonuclease required for mitochondrial metabolism. This chain is Exonuclease 3'-5' domain-containing protein 2, found in Drosophila melanogaster (Fruit fly).